The following is a 157-amino-acid chain: MSAKPATDDAKDELLSPFRRLYALTRTPYPALANAALLASTPVLSPSFKVPPTQSPALSIPMSRVFSKSSTARIGITTKTALFFSTMQAIGAYMIYDNDLENGAGFIATWSALYLIVGGKKSFSALRYGRTWPLVLSSVSLANAVLYGQRFLATGFQ.

N-acetylserine is present on S2. Transmembrane regions (helical) follow at residues A31–F48, T80–Y96, G103–G119, and T131–Y147.

The protein belongs to the AIM19 family.

It is found in the mitochondrion membrane. This is Altered inheritance of mitochondria protein 19, mitochondrial (AIM19) from Saccharomyces cerevisiae (strain ATCC 204508 / S288c) (Baker's yeast).